A 157-amino-acid polypeptide reads, in one-letter code: Aspartate carbamoyltransferase regulatory chain (157 aa).

Zn(2+) contacts are provided by Cys-108, Cys-113, Cys-138, and Cys-141.

The protein belongs to the PyrI family. As to quaternary structure, contains catalytic and regulatory chains. The cofactor is Zn(2+).

Its function is as follows. Involved in allosteric regulation of aspartate carbamoyltransferase. In Ignicoccus hospitalis (strain KIN4/I / DSM 18386 / JCM 14125), this protein is Aspartate carbamoyltransferase regulatory chain.